The sequence spans 408 residues: Acetate kinase (408 aa).

Mg(2+) is bound at residue Asn-7. Residue Lys-14 participates in ATP binding. Substrate is bound at residue Arg-91. Asp-148 acts as the Proton donor/acceptor in catalysis. Residues 208–212, 283–285, and 331–335 contribute to the ATP site; these read HLGNG, DFR, and GIGEN. Glu-384 serves as a coordination point for Mg(2+).

This sequence belongs to the acetokinase family. As to quaternary structure, homodimer. Mg(2+) is required as a cofactor. The cofactor is Mn(2+).

It is found in the cytoplasm. The enzyme catalyses acetate + ATP = acetyl phosphate + ADP. Its pathway is metabolic intermediate biosynthesis; acetyl-CoA biosynthesis; acetyl-CoA from acetate: step 1/2. Catalyzes the formation of acetyl phosphate from acetate and ATP. Can also catalyze the reverse reaction. This is Acetate kinase from Methanosarcina mazei (strain ATCC BAA-159 / DSM 3647 / Goe1 / Go1 / JCM 11833 / OCM 88) (Methanosarcina frisia).